A 257-amino-acid chain; its full sequence is 5-oxoprolinase subunit A (257 aa).

It belongs to the LamB/PxpA family. Forms a complex composed of PxpA, PxpB and PxpC.

The catalysed reaction is 5-oxo-L-proline + ATP + 2 H2O = L-glutamate + ADP + phosphate + H(+). Functionally, catalyzes the cleavage of 5-oxoproline to form L-glutamate coupled to the hydrolysis of ATP to ADP and inorganic phosphate. This Natranaerobius thermophilus (strain ATCC BAA-1301 / DSM 18059 / JW/NM-WN-LF) protein is 5-oxoprolinase subunit A.